We begin with the raw amino-acid sequence, 192 residues long: Ion-translocating oxidoreductase complex subunit A (192 aa).

Transmembrane regions (helical) follow at residues 5 to 25 (ILLL…FLGL), 39 to 59 (IGMG…AYLV), 72 to 92 (LRTM…EMVV), 102 to 122 (LLGI…VALL), 134 to 154 (IIYG…FASM), and 171 to 191 (SIAM…TGLV).

This sequence belongs to the NqrDE/RnfAE family. As to quaternary structure, the complex is composed of six subunits: RnfA, RnfB, RnfC, RnfD, RnfE and RnfG.

The protein resides in the cell inner membrane. Part of a membrane-bound complex that couples electron transfer with translocation of ions across the membrane. This Vibrio vulnificus (strain CMCP6) protein is Ion-translocating oxidoreductase complex subunit A.